The sequence spans 212 residues: Glutathione S-transferase (212 aa).

Residues 1 to 82 (MGMKLHGPAM…YIAHTYADKG (82 aa)) form the GST N-terminal domain. Residues S11, 12-13 (PA), 40-41 (HK), 53-54 (QV), and 66-67 (ES) contribute to the glutathione site. The GST C-terminal domain maps to 89–212 (DPKKMAIMSV…AWSKAIEYKQ (124 aa)).

This sequence belongs to the GST superfamily. Phi family.

The enzyme catalyses RX + glutathione = an S-substituted glutathione + a halide anion + H(+). In terms of biological role, conjugation of reduced glutathione to a wide number of exogenous and endogenous hydrophobic electrophiles. The protein is Glutathione S-transferase of Hyoscyamus muticus (Egyptian henbane).